The sequence spans 227 residues: PKHD-type hydroxylase Pden_4677 (227 aa).

Positions 78–178 (HILPPMFNRY…RWASFFWAQS (101 aa)) constitute a Fe2OG dioxygenase domain. Fe cation is bound by residues His96, Asp98, and His159. A 2-oxoglutarate-binding site is contributed by Arg169.

Fe(2+) is required as a cofactor. L-ascorbate serves as cofactor.

The polypeptide is PKHD-type hydroxylase Pden_4677 (Paracoccus denitrificans (strain Pd 1222)).